A 186-amino-acid chain; its full sequence is Hydra actinoporin-like toxin 6 (186 aa).

The N-terminal stretch at M1–G21 is a signal peptide. A Cell attachment site motif is present at residues R158–G160.

Belongs to the actinoporin family. HALT subfamily. In terms of assembly, octamer or nonamer in membranes. Monomer in the soluble state. In vitro, interacts with folate receptor alpha (of target organism). Expressed female germline during oogenesis.

It localises to the nematocyst. It is found in the secreted. The protein localises to the target cell membrane. Its function is as follows. Pore-forming protein that forms hydrophilic pores and causes cytolysis. Compared to equinatoxin-2 (AC P61914), it reveals lower cytolysis activity (5-12-fold difference, tested on erythrocytes), a larger pore size (probably 2-3 nm) and different affinity to membrane lipids (100-fold lower affinity to sphingomyelin). Binds to sulfatides. Shows cytolytic activity on HeLa cells, with a different potency than its paralogs (from most potent to less potent: HALT-4&gt;HALT-6~HALT-1&gt;HALT-3&gt;HALT-7&gt;HALT-2). Pore formation is a multi-step process that involves specific recognition of membrane lipid by a protein aromatic residues rich region, firm binding to the membrane (mainly driven by hydrophobic interactions) accompanied by the transfer of the N-terminal region to the lipid-water interface and finally pore formation after oligomerization of monomers. In vitro, binds to the folate receptor alpha (FOLR1), a GPI-anchored membrane protein that plays a major role in the uptake of folate/folic acid into cells via endocytosis, suggesting a possible involvement of this receptor in the mechanism of HALT-1-induced cell lysis. In vivo, does not cause visible paralysis in larvae of the blowfly Sarcophaga faculata, the most common arthropod prey of Hydra. The sequence is that of Hydra actinoporin-like toxin 6 from Hydra vulgaris (Hydra).